We begin with the raw amino-acid sequence, 514 residues long: Na(+)/H(+) antiporter NhaB (514 aa).

The next 11 helical transmembrane spans lie at 13–33 (FMGN…IINP), 34–54 (LIFF…EFIF), 96–116 (VILL…LLLF), 136–156 (CFAS…AVVI), 203–223 (LMMH…VGEP), 236–256 (FVTF…AGLA), 304–324 (ALIG…VGII), 349–369 (EEAL…AVII), 392–412 (LFYL…VGTV), 448–468 (ATPN…SPLI), and 479–499 (ALPY…FWLV).

This sequence belongs to the NhaB Na(+)/H(+) (TC 2.A.34) antiporter family.

The protein resides in the cell inner membrane. The enzyme catalyses 2 Na(+)(in) + 3 H(+)(out) = 2 Na(+)(out) + 3 H(+)(in). Its function is as follows. Na(+)/H(+) antiporter that extrudes sodium in exchange for external protons. In Proteus mirabilis (strain HI4320), this protein is Na(+)/H(+) antiporter NhaB.